We begin with the raw amino-acid sequence, 575 residues long: Carboxylesterase 5A (575 aa).

The signal sequence occupies residues 1-28 (MSGDWVRPGQALIWVIWIFGAIIEGSVT). A disulfide bridge connects residues Cys94 and Cys121. N-linked (GlcNAc...) asparagine glycosylation is present at Asn134. Catalysis depends on Ser226, which acts as the Acyl-ester intermediate. A disulfide bridge connects residues Cys280 and Cys291. N-linked (GlcNAc...) asparagine glycosylation is present at Asn281. Glu345 serves as the catalytic Charge relay system. The N-linked (GlcNAc...) asparagine glycan is linked to Asn363. The Charge relay system role is filled by His454. Asn524 carries N-linked (GlcNAc...) asparagine glycosylation.

Belongs to the type-B carboxylesterase/lipase family. N-glycosylated.

It localises to the secreted. The catalysed reaction is a carboxylic ester + H2O = an alcohol + a carboxylate + H(+). Its function is as follows. Involved in the detoxification of xenobiotics and in the activation of ester and amide prodrugs. The protein is Carboxylesterase 5A (Ces5a) of Mus musculus (Mouse).